Here is a 585-residue protein sequence, read N- to C-terminus: Arginine--tRNA ligase (585 aa).

The 'HIGH' region signature appears at 126-136 (PNIAKEMHVGH).

This sequence belongs to the class-I aminoacyl-tRNA synthetase family. Monomer.

The protein localises to the cytoplasm. The catalysed reaction is tRNA(Arg) + L-arginine + ATP = L-arginyl-tRNA(Arg) + AMP + diphosphate. This chain is Arginine--tRNA ligase, found in Trichodesmium erythraeum (strain IMS101).